A 256-amino-acid chain; its full sequence is Undecaprenyl-diphosphatase (256 aa).

A run of 7 helical transmembrane segments spans residues 39–59 (PTDA…AVLV), 77–97 (RTVI…YMLF), 101–121 (FTGG…TGLM), 135–155 (ISTK…LPGV), 176–196 (LMVS…LDCL), 206–226 (LPGA…MDVL), and 233–253 (VSFS…TALP).

Belongs to the UppP family.

Its subcellular location is the cell membrane. It carries out the reaction di-trans,octa-cis-undecaprenyl diphosphate + H2O = di-trans,octa-cis-undecaprenyl phosphate + phosphate + H(+). Its function is as follows. Catalyzes the dephosphorylation of undecaprenyl diphosphate (UPP). The sequence is that of Undecaprenyl-diphosphatase from Methanothrix thermoacetophila (strain DSM 6194 / JCM 14653 / NBRC 101360 / PT) (Methanosaeta thermophila).